A 103-amino-acid chain; its full sequence is Phosphoribosyl-ATP pyrophosphatase (103 aa).

A disordered region spans residues 79 to 103 (SVQAELERREGKLSTTRDRKEIDEL). The span at 83 to 103 (ELERREGKLSTTRDRKEIDEL) shows a compositional bias: basic and acidic residues.

It belongs to the PRA-PH family.

The protein resides in the cytoplasm. The catalysed reaction is 1-(5-phospho-beta-D-ribosyl)-ATP + H2O = 1-(5-phospho-beta-D-ribosyl)-5'-AMP + diphosphate + H(+). It functions in the pathway amino-acid biosynthesis; L-histidine biosynthesis; L-histidine from 5-phospho-alpha-D-ribose 1-diphosphate: step 2/9. In Listeria welshimeri serovar 6b (strain ATCC 35897 / DSM 20650 / CCUG 15529 / CIP 8149 / NCTC 11857 / SLCC 5334 / V8), this protein is Phosphoribosyl-ATP pyrophosphatase.